We begin with the raw amino-acid sequence, 388 residues long: Phosphoglycerate kinase (388 aa).

Residues 21-23 (DLN), Arg36, 59-62 (HLGR), Arg114, and Arg147 contribute to the substrate site. Residues Lys198, Glu315, and 341 to 344 (GGDT) each bind ATP.

Belongs to the phosphoglycerate kinase family. In terms of assembly, monomer.

It is found in the cytoplasm. It carries out the reaction (2R)-3-phosphoglycerate + ATP = (2R)-3-phospho-glyceroyl phosphate + ADP. The protein operates within carbohydrate degradation; glycolysis; pyruvate from D-glyceraldehyde 3-phosphate: step 2/5. The sequence is that of Phosphoglycerate kinase from Hahella chejuensis (strain KCTC 2396).